Consider the following 383-residue polypeptide: tRNA-specific 2-thiouridylase MnmA (383 aa).

Residues 9 to 16 (GMSGGVDS) and M35 contribute to the ATP site. Residues 95–97 (NPD) form an interaction with target base in tRNA region. The active-site Nucleophile is the C100. C100 and C196 are oxidised to a cystine. G124 is a binding site for ATP. The interval 146–148 (KDQ) is interaction with tRNA. C196 functions as the Cysteine persulfide intermediate in the catalytic mechanism. Residues 308-309 (RY) are interaction with tRNA.

This sequence belongs to the MnmA/TRMU family.

It is found in the cytoplasm. It catalyses the reaction S-sulfanyl-L-cysteinyl-[protein] + uridine(34) in tRNA + AH2 + ATP = 2-thiouridine(34) in tRNA + L-cysteinyl-[protein] + A + AMP + diphosphate + H(+). Functionally, catalyzes the 2-thiolation of uridine at the wobble position (U34) of tRNA, leading to the formation of s(2)U34. The protein is tRNA-specific 2-thiouridylase MnmA of Burkholderia pseudomallei (strain 668).